The sequence spans 248 residues: Aspartate/glutamate leucyltransferase (248 aa).

This sequence belongs to the R-transferase family. Bpt subfamily.

The protein localises to the cytoplasm. It catalyses the reaction N-terminal L-glutamyl-[protein] + L-leucyl-tRNA(Leu) = N-terminal L-leucyl-L-glutamyl-[protein] + tRNA(Leu) + H(+). It carries out the reaction N-terminal L-aspartyl-[protein] + L-leucyl-tRNA(Leu) = N-terminal L-leucyl-L-aspartyl-[protein] + tRNA(Leu) + H(+). Its function is as follows. Functions in the N-end rule pathway of protein degradation where it conjugates Leu from its aminoacyl-tRNA to the N-termini of proteins containing an N-terminal aspartate or glutamate. In Polynucleobacter asymbioticus (strain DSM 18221 / CIP 109841 / QLW-P1DMWA-1) (Polynucleobacter necessarius subsp. asymbioticus), this protein is Aspartate/glutamate leucyltransferase.